The following is a 213-amino-acid chain: Protein GET1 (213 aa).

Over 1-4 the chain is Lumenal; the sequence is MPSL. A helical transmembrane segment spans residues 5-24; that stretch reads LLVVFILQFLLHIINTVGAS. Residues 25–110 lie on the Cytoplasmic side of the membrane; it reads TVNDLLWILY…AFTSAVSTLR (86 aa). Residues 41-68 are a coiled coil; it reads TSSSAQKAQKLKKEIVQLKRELGATSAQ. A helical transmembrane segment spans residues 111–131; the sequence is WLGTQGLRFVLQFWFAKSPMF. The Lumenal segment spans residues 132–155; sequence WMPAGWLPFYVEWILSFPRAPLGS. Residues 156–172 form a helical membrane-spanning segment; it reads VSINVWGIACASMIALA. At 173-213 the chain is on the cytoplasmic side; it reads AEGLAAVWVLATKRPTPIATEKKEAMAFAADQKSSGEKKEL.

The protein belongs to the WRB/GET1 family. As to quaternary structure, interacts with GET3.

The protein localises to the endoplasmic reticulum membrane. Its function is as follows. Required for the post-translational delivery of tail-anchored (TA) proteins to the endoplasmic reticulum. Acts as a membrane receptor for soluble GET3, which recognizes and selectively binds the transmembrane domain of TA proteins in the cytosol. The polypeptide is Protein GET1 (Phaeosphaeria nodorum (strain SN15 / ATCC MYA-4574 / FGSC 10173) (Glume blotch fungus)).